The following is a 349-amino-acid chain: Holliday junction branch migration complex subunit RuvB (349 aa).

The segment at 1–183 is large ATPase domain (RuvB-L); the sequence is MTDPSRLVTP…FGIPIRLNFY (183 aa). ATP is bound by residues Leu22, Arg23, Gly64, Lys67, Thr68, Thr69, 130–132, Arg173, Tyr183, and Arg220; that span reads EDF. Residue Thr68 coordinates Mg(2+). The segment at 184–254 is small ATPAse domain (RuvB-S); the sequence is TIEELESIVT…IADHALGALE (71 aa). Residues 257–349 form a head domain (RuvB-H) region; it reads SAGLDAMDRR…GLFGDTGDQE (93 aa). DNA-binding residues include Arg293, Arg312, and Arg317.

Belongs to the RuvB family. As to quaternary structure, homohexamer. Forms an RuvA(8)-RuvB(12)-Holliday junction (HJ) complex. HJ DNA is sandwiched between 2 RuvA tetramers; dsDNA enters through RuvA and exits via RuvB. An RuvB hexamer assembles on each DNA strand where it exits the tetramer. Each RuvB hexamer is contacted by two RuvA subunits (via domain III) on 2 adjacent RuvB subunits; this complex drives branch migration. In the full resolvosome a probable DNA-RuvA(4)-RuvB(12)-RuvC(2) complex forms which resolves the HJ.

It localises to the cytoplasm. The enzyme catalyses ATP + H2O = ADP + phosphate + H(+). Functionally, the RuvA-RuvB-RuvC complex processes Holliday junction (HJ) DNA during genetic recombination and DNA repair, while the RuvA-RuvB complex plays an important role in the rescue of blocked DNA replication forks via replication fork reversal (RFR). RuvA specifically binds to HJ cruciform DNA, conferring on it an open structure. The RuvB hexamer acts as an ATP-dependent pump, pulling dsDNA into and through the RuvAB complex. RuvB forms 2 homohexamers on either side of HJ DNA bound by 1 or 2 RuvA tetramers; 4 subunits per hexamer contact DNA at a time. Coordinated motions by a converter formed by DNA-disengaged RuvB subunits stimulates ATP hydrolysis and nucleotide exchange. Immobilization of the converter enables RuvB to convert the ATP-contained energy into a lever motion, pulling 2 nucleotides of DNA out of the RuvA tetramer per ATP hydrolyzed, thus driving DNA branch migration. The RuvB motors rotate together with the DNA substrate, which together with the progressing nucleotide cycle form the mechanistic basis for DNA recombination by continuous HJ branch migration. Branch migration allows RuvC to scan DNA until it finds its consensus sequence, where it cleaves and resolves cruciform DNA. In Rhodopseudomonas palustris (strain TIE-1), this protein is Holliday junction branch migration complex subunit RuvB.